A 233-amino-acid chain; its full sequence is 2-C-methyl-D-erythritol 4-phosphate cytidylyltransferase (233 aa).

The protein belongs to the IspD/TarI cytidylyltransferase family. IspD subfamily.

It catalyses the reaction 2-C-methyl-D-erythritol 4-phosphate + CTP + H(+) = 4-CDP-2-C-methyl-D-erythritol + diphosphate. It participates in isoprenoid biosynthesis; isopentenyl diphosphate biosynthesis via DXP pathway; isopentenyl diphosphate from 1-deoxy-D-xylulose 5-phosphate: step 2/6. Functionally, catalyzes the formation of 4-diphosphocytidyl-2-C-methyl-D-erythritol from CTP and 2-C-methyl-D-erythritol 4-phosphate (MEP). This chain is 2-C-methyl-D-erythritol 4-phosphate cytidylyltransferase, found in Geotalea uraniireducens (strain Rf4) (Geobacter uraniireducens).